Consider the following 687-residue polypeptide: MSDKNKKVSAFAAYRGSATSKNDVQKGTKNSDKNGAAKNNNNRNLASKNGGKQKGPPKKNGSYSDGDNGSSSSSGEDEEDDSTDSSDEYESSESGEEYTLNSHSSQSSPETPANTRESLKRRNDEAEGSNPIGAKRTSSTPVGQSTSAARSTQQPKAPSCPLQRRSCPLPSKKNTVPVKVEVASPDRALLSPQSIKKEPGASMLCRIKIGLVKSVQPGGDAGAEAGAGQAVNRLEPCHKVHKENSIEVGKRTLAQLIAPMTMATFLRDHWEKSPFRVKTTTSGGFSNLISFKMIDQMLIQNHVEYTTNIDVTSYEDGVRKTLNPDGRALPPSVWAHYQRGCSIRILNPSSYLVQLRQLCVKLQEFFHCLVGANVYLTPPESQGFAPHYDDIEAFVLQVEGKKRWRIYAPTKELPRESSGNLSQTELGDPIMDIVLKPGDLLYFPRGWIHQAITEKDSHSLHITLSAYQQQSYANLMEKLMPLVVKESVEQTLKLRKGLPLDIFQNLGVANAEWKGAHRQKLIQHIQNLAQRLVPTEGQIDRALDQLAIKFQHEALPPTIAPQELKRTVFGAQATADRNGHCSLDYELAEGTAVRLLRANIVRLTVDEGVLRCYYYTDNGLEYCKYEPNFFELEPFHGTVIETLIHAYPEYTKIKDLPPMGNDEDRLEFVEALWERGILMVEKPFKKL.

Positions 1-174 (MSDKNKKVSA…RSCPLPSKKN (174 aa)) are disordered. The span at 23–32 (DVQKGTKNSD) shows a compositional bias: basic and acidic residues. 2 stretches are compositionally biased toward low complexity: residues 33-50 (KNGA…SKNG) and 58-74 (KKNG…SSSS). Residues 75–96 (GEDEEDDSTDSSDEYESSESGE) are compositionally biased toward acidic residues. Polar residues-rich tracts occupy residues 100–116 (LNSH…ANTR) and 136–156 (RTSS…QQPK). Positions 347 to 483 (NPSSYLVQLR…NLMEKLMPLV (137 aa)) constitute a JmjC domain. Fe cation is bound by residues His-387, Asp-389, and His-449.

This sequence belongs to the ROX family. NO66 subfamily. Requires Fe(2+) as cofactor.

It is found in the nucleus. The enzyme catalyses N(6),N(6)-dimethyl-L-lysyl(36)-[histone H3] + 2 2-oxoglutarate + 2 O2 = L-lysyl(36)-[histone H3] + 2 formaldehyde + 2 succinate + 2 CO2. Functionally, oxygenase that can act as both a histone lysine demethylase and a ribosomal histidine hydroxylase. Specifically demethylates 'Lys-4' (H3K4me) and 'Lys-36' (H3K36me) of histone H3, thereby playing a central role in histone code. This is Bifunctional lysine-specific demethylase and histidyl-hydroxylase NO66 from Drosophila persimilis (Fruit fly).